Here is a 344-residue protein sequence, read N- to C-terminus: uncharacterized protein (344 aa).

Positions 1–20 (MEIRIMLFILMMMVMPVSYA) are cleaved as a signal peptide.

The protein belongs to the fimbrial protein family.

Functionally, part of the yehABCD fimbrial operon. Could contribute to adhesion to various surfaces in specific environmental niches. This is an uncharacterized protein from Escherichia coli (strain K12).